A 428-amino-acid polypeptide reads, in one-letter code: Histidinol dehydrogenase (428 aa).

The NAD(+) site is built by Y125, Q187, and N210. Substrate contacts are provided by S234, Q256, and H259. Zn(2+) contacts are provided by Q256 and H259. Catalysis depends on proton acceptor residues E323 and H324. Substrate-binding residues include H324, D357, E411, and H416. D357 provides a ligand contact to Zn(2+). H416 contributes to the Zn(2+) binding site.

It belongs to the histidinol dehydrogenase family. Zn(2+) serves as cofactor.

It catalyses the reaction L-histidinol + 2 NAD(+) + H2O = L-histidine + 2 NADH + 3 H(+). Its pathway is amino-acid biosynthesis; L-histidine biosynthesis; L-histidine from 5-phospho-alpha-D-ribose 1-diphosphate: step 9/9. Functionally, catalyzes the sequential NAD-dependent oxidations of L-histidinol to L-histidinaldehyde and then to L-histidine. This chain is Histidinol dehydrogenase, found in Bacteroides thetaiotaomicron (strain ATCC 29148 / DSM 2079 / JCM 5827 / CCUG 10774 / NCTC 10582 / VPI-5482 / E50).